We begin with the raw amino-acid sequence, 183 residues long: Transmembrane protein 154 (183 aa).

Positions 1 to 22 are cleaved as a signal peptide; that stretch reads MQAPRAALVFALVIALVPVGRG. At 23 to 75 the chain is on the extracellular side; the sequence is NYEELENSGDTTVESERPNKVTIPSTFAAVTIKETLNANINSTNFAPDENQLE. Residues 76 to 96 form a helical membrane-spanning segment; sequence FILMVLIPLILLVLLLLSVVF. Topologically, residues 97–183 are cytoplasmic; it reads LATYYKRKRT…SNHNPSDSES (87 aa). The tract at residues 163–183 is disordered; it reads ECLPTLKEEKESNHNPSDSES. At serine 179 the chain carries Phosphoserine.

It is found in the membrane. The sequence is that of Transmembrane protein 154 (TMEM154) from Homo sapiens (Human).